A 290-amino-acid polypeptide reads, in one-letter code: 4-diphosphocytidyl-2-C-methyl-D-erythritol kinase (290 aa).

The active site involves Lys-13. ATP is bound at residue 96–106 (PMGGGIGGGSS). Asp-138 is an active-site residue.

Belongs to the GHMP kinase family. IspE subfamily.

It catalyses the reaction 4-CDP-2-C-methyl-D-erythritol + ATP = 4-CDP-2-C-methyl-D-erythritol 2-phosphate + ADP + H(+). Its pathway is isoprenoid biosynthesis; isopentenyl diphosphate biosynthesis via DXP pathway; isopentenyl diphosphate from 1-deoxy-D-xylulose 5-phosphate: step 3/6. Functionally, catalyzes the phosphorylation of the position 2 hydroxy group of 4-diphosphocytidyl-2C-methyl-D-erythritol. This Vibrio campbellii (strain ATCC BAA-1116) protein is 4-diphosphocytidyl-2-C-methyl-D-erythritol kinase.